Reading from the N-terminus, the 252-residue chain is GPI alpha-1,4-mannosyltransferase I, stabilizing subunit (252 aa).

The N-terminal stretch at 1–22 (MAASALAWLLLWAAGLVGRLAA) is a signal peptide. 2 N-linked (GlcNAc...) asparagine glycosylation sites follow: Asn97 and Asn209. Residues 225–245 (VCSVTLLITVLCSTLILLAVF) traverse the membrane as a helical segment.

This sequence belongs to the PIGX family. As to quaternary structure, part of the glycosylphosphatidylinositol-mannosyltransferase I complex that is composed of PIGM and PIGX. Interacts with PIGM; PIGX stabilizes PIGM.

It is found in the endoplasmic reticulum membrane. The protein operates within glycolipid biosynthesis; glycosylphosphatidylinositol-anchor biosynthesis. Functionally, stabilizing subunit of the glycosylphosphatidylinositol-mannosyltransferase I complex which catalyzes the transfer of the first mannose, via an alpha-1,4 bond from a dolichol-phosphate-mannose (Dol-P-Man) to the glucosaminyl acyl phosphatidylinositol (GlcN-(acyl)PI) intermediate to generate alpha-D-Man-(1-&gt;4)-alpha-D-GlcN-(1-&gt;6)-(1-radyl,2-acyl-sn-glycero-3-phospho)-2-acyl-inositol and participates in the sixth step of the glycosylphosphatidylinositol-anchor biosynthesis. Probably acts by stabilizing the mannosyltransferase PIGM. In Rattus norvegicus (Rat), this protein is GPI alpha-1,4-mannosyltransferase I, stabilizing subunit.